Reading from the N-terminus, the 356-residue chain is Phosphate acyltransferase (356 aa).

It belongs to the PlsX family. Homodimer. Probably interacts with PlsY.

It is found in the cytoplasm. It catalyses the reaction a fatty acyl-[ACP] + phosphate = an acyl phosphate + holo-[ACP]. The protein operates within lipid metabolism; phospholipid metabolism. Catalyzes the reversible formation of acyl-phosphate (acyl-PO(4)) from acyl-[acyl-carrier-protein] (acyl-ACP). This enzyme utilizes acyl-ACP as fatty acyl donor, but not acyl-CoA. In Shigella sonnei (strain Ss046), this protein is Phosphate acyltransferase.